The following is a 473-amino-acid chain: Mediator of RNA polymerase II transcription subunit 29 (473 aa).

The segment covering methionine 1–proline 12 has biased composition (polar residues). 2 disordered regions span residues methionine 1–glutamine 319 and serine 444–glutamate 473. Residues glutamine 13 to glutamine 50 are compositionally biased toward low complexity. Residues serine 51–glutamine 62 are compositionally biased toward polar residues. 2 stretches are compositionally biased toward low complexity: residues glutamine 111–methionine 123 and valine 130–proline 139. Composition is skewed to polar residues over residues threonine 148 to histidine 183 and proline 255 to serine 269. Low complexity-rich tracts occupy residues alanine 272–alanine 286 and alanine 294–alanine 308.

This sequence belongs to the Mediator complex subunit 29 family. As to quaternary structure, component of the Mediator complex.

It is found in the nucleus. In terms of biological role, component of the Mediator complex, a coactivator involved in the regulated transcription of nearly all RNA polymerase II-dependent genes. Mediator functions as a bridge to convey information from gene-specific regulatory proteins to the basal RNA polymerase II transcription machinery. Mediator is recruited to promoters by direct interactions with regulatory proteins and serves as a scaffold for the assembly of a functional preinitiation complex with RNA polymerase II and the general transcription factors. The polypeptide is Mediator of RNA polymerase II transcription subunit 29 (mdt-29) (Caenorhabditis briggsae).